The sequence spans 584 residues: Cilia- and flagella-associated protein 184 (584 aa).

Composition is skewed to basic and acidic residues over residues 1 to 18, 42 to 57, and 67 to 82; these read MDSH…EEGL, PEPK…REPE, and SKAK…HVEV. A disordered region spans residues 1 to 243; that stretch reads MDSHYGDIEG…ASTEEFEWTA (243 aa). The segment covering 119-146 has biased composition (acidic residues); it reads DKDEDEDEDEDEDEDEDEDEDEDEDEGE. Over residues 189–232 the composition is skewed to basic and acidic residues; the sequence is AKEKARESLKKRDSEEIEGTDRERHKSTEEQLHPGEAKEEEKQK. 2 coiled-coil regions span residues 317-470 and 530-561; these read LAML…SNVQ and LLGK…KRHH.

The protein belongs to the CFAP184 family. Forms a complex with CFAP263; the interaction is required for functional activity in cilia.

The protein resides in the cell projection. It localises to the cilium. It is found in the cytoplasm. The protein localises to the cytoskeleton. Its subcellular location is the microtubule organizing center. The protein resides in the centrosome. Its function is as follows. In complex with CFAP263, acts as a regulator of ciliary beating that connects radial spoke 3 (RS3) to the inner dynein arm (IDA) and the nexin-dynein regulatory complex (N-DRC). The complex is positioned parallel to N-DRC and forms a connection between the arch at the base of RS3, the IDA tail and N-DRC. This Mus musculus (Mouse) protein is Cilia- and flagella-associated protein 184 (Cfap184).